The primary structure comprises 560 residues: Terminal uridylyltransferase Tailor (560 aa).

The disordered stretch occupies residues 169 to 197 (EQHPKPNPNNQPVQPHPTHQTKQEKKQAQ). Over residues 176-188 (PNNQPVQPHPTHQ) the composition is skewed to low complexity. Positions 278 and 280 each coordinate Mg(2+). The PAP-associated domain occupies 455 to 522 (LRNFFAYFAK…VVQDPIQLNH (68 aa)).

It depends on Mg(2+) as a cofactor.

It localises to the cytoplasm. The catalysed reaction is RNA(n) + UTP = RNA(n)-3'-uridine ribonucleotide + diphosphate. Its function is as follows. Uridylyltransferase which mediates terminal uridylation of miRNAs, leading to their degradation. Has high specificity for splicing-derived miRNAs (mirtrons) and other miRNA substrates containing a 3'-G terminal nucleotide. Appears to be a major suppressor of mirtron biogenesis. This chain is Terminal uridylyltransferase Tailor, found in Drosophila melanogaster (Fruit fly).